The primary structure comprises 216 residues: Probable nicotinate-nucleotide adenylyltransferase (216 aa).

Belongs to the NadD family.

The enzyme catalyses nicotinate beta-D-ribonucleotide + ATP + H(+) = deamido-NAD(+) + diphosphate. The protein operates within cofactor biosynthesis; NAD(+) biosynthesis; deamido-NAD(+) from nicotinate D-ribonucleotide: step 1/1. Catalyzes the reversible adenylation of nicotinate mononucleotide (NaMN) to nicotinic acid adenine dinucleotide (NaAD). This chain is Probable nicotinate-nucleotide adenylyltransferase, found in Klebsiella pneumoniae (strain 342).